The chain runs to 227 residues: MMLQIPEVLTKAQVAECRAILDAGPWVDGNVTSGFQAAMAKNNEQLPQDSAEARHVGAIIVQALEANPLFVSAALPRTILSPMFNRYGEGMGFRDHVDNAIRRDPVTGQRLRTDLSCTLFLAEPEDYDGGELVVNDLYGDHVVKLAAGDAILYPSTSLHHVTTVTRGRRTASFFWIQSLIRDDARRSLLLDMDVAIQQLSRKVERDDEAILSLTGVYHNLLRQWAEV.

The 101-residue stretch at 78 to 178 folds into the Fe2OG dioxygenase domain; the sequence is TILSPMFNRY…RTASFFWIQS (101 aa). 3 residues coordinate Fe cation: H96, D98, and H159. R169 is a 2-oxoglutarate binding site.

Requires Fe(2+) as cofactor. The cofactor is L-ascorbate.

The chain is PKHD-type hydroxylase CC_0027 from Caulobacter vibrioides (strain ATCC 19089 / CIP 103742 / CB 15) (Caulobacter crescentus).